A 727-amino-acid polypeptide reads, in one-letter code: Glycerol-3-phosphate dehydrogenase, mitochondrial (727 aa).

Residues 1 to 42 (MAFQKVVKGTILMGGGALATVLGLSQFAHYRRKQVSLAYVEA) constitute a mitochondrion transit peptide. 71-99 (DILVIGGGATGCGCALDAVTRGLKTALVE) provides a ligand contact to FAD. Tyrosine 601 carries the phosphotyrosine modification. EF-hand domains follow at residues 623-658 (PDID…INVQ) and 659-694 (MDED…VHTG). Residues aspartate 672, asparagine 674, asparagine 676, glutamine 678, and glutamate 683 each contribute to the Ca(2+) site.

The protein belongs to the FAD-dependent glycerol-3-phosphate dehydrogenase family. It depends on FAD as a cofactor.

The protein localises to the mitochondrion. The enzyme catalyses a quinone + sn-glycerol 3-phosphate = dihydroxyacetone phosphate + a quinol. Its pathway is polyol metabolism; glycerol degradation via glycerol kinase pathway; glycerone phosphate from sn-glycerol 3-phosphate (anaerobic route): step 1/1. With respect to regulation, calcium-binding enhance the activity of the enzyme. Functionally, calcium-responsive mitochondrial glycerol-3-phosphate dehydrogenase which seems to be a key component of the pancreatic beta-cell glucose-sensing device. The polypeptide is Glycerol-3-phosphate dehydrogenase, mitochondrial (Rattus norvegicus (Rat)).